The primary structure comprises 160 residues: Succinate dehydrogenase assembly factor 2-B, mitochondrial (160 aa).

Residues 1–23 (MLRQLKLTLNISRWIFMPWQRHA) constitute a mitochondrion transit peptide.

It belongs to the SDHAF2 family. Interacts with the flavoprotein subunit within the SDH catalytic dimer.

It localises to the mitochondrion matrix. In terms of biological role, plays an essential role in the assembly of succinate dehydrogenase (SDH), an enzyme complex (also referred to as respiratory complex II) that is a component of both the tricarboxylic acid (TCA) cycle and the mitochondrial electron transport chain, and which couples the oxidation of succinate to fumarate with the reduction of ubiquinone (coenzyme Q) to ubiquinol. Required for flavinylation (covalent attachment of FAD) of the flavoprotein subunit of the SDH catalytic dimer. This chain is Succinate dehydrogenase assembly factor 2-B, mitochondrial, found in Drosophila pseudoobscura pseudoobscura (Fruit fly).